A 215-amino-acid polypeptide reads, in one-letter code: Mediator of RNA polymerase II transcription subunit 20 (215 aa).

This sequence belongs to the Mediator complex subunit 20 family. Component of the Mediator complex.

It localises to the nucleus. Its function is as follows. Component of the Mediator complex, a coactivator involved in the regulated transcription of nearly all RNA polymerase II-dependent genes. Mediator functions as a bridge to convey information from gene-specific regulatory proteins to the basal RNA polymerase II transcription machinery. Mediator is recruited to promoters by direct interactions with regulatory proteins and serves as a scaffold for the assembly of a functional preinitiation complex with RNA polymerase II and the general transcription factors. This chain is Mediator of RNA polymerase II transcription subunit 20 (SRB2), found in Candida glabrata (strain ATCC 2001 / BCRC 20586 / JCM 3761 / NBRC 0622 / NRRL Y-65 / CBS 138) (Yeast).